Consider the following 122-residue polypeptide: Large ribosomal subunit protein uL18 (122 aa).

Belongs to the universal ribosomal protein uL18 family. In terms of assembly, part of the 50S ribosomal subunit; part of the 5S rRNA/L5/L18/L25 subcomplex. Contacts the 5S and 23S rRNAs.

In terms of biological role, this is one of the proteins that bind and probably mediate the attachment of the 5S RNA into the large ribosomal subunit, where it forms part of the central protuberance. The chain is Large ribosomal subunit protein uL18 from Prochlorococcus marinus (strain MIT 9215).